The primary structure comprises 86 residues: Ferredoxin-like protein YgcO (86 aa).

A 4Fe-4S ferredoxin-type domain is found at 45–74; the sequence is GNLRIDYRSCLECGTCRLLCDESTLQQWRY.

Belongs to the bacterial-type ferredoxin family. FixX subfamily.

In terms of biological role, could be a 3Fe-4S cluster-containing protein. Probably participates in a redox process with YgcN, YgcQ and YgcR. This is Ferredoxin-like protein YgcO (ygcO) from Escherichia coli (strain K12).